The following is a 175-amino-acid chain: ATP synthase subunit b (175 aa).

The chain crosses the membrane as a helical span at residues 20-40 (LIFWTAITFVIVLLILKKIAW).

It belongs to the ATPase B chain family. In terms of assembly, F-type ATPases have 2 components, F(1) - the catalytic core - and F(0) - the membrane proton channel. F(1) has five subunits: alpha(3), beta(3), gamma(1), delta(1), epsilon(1). F(0) has four main subunits: a(1), b(2) and c(10-14). The alpha and beta chains form an alternating ring which encloses part of the gamma chain. F(1) is attached to F(0) by a central stalk formed by the gamma and epsilon chains, while a peripheral stalk is formed by the delta and b chains.

It localises to the cell inner membrane. F(1)F(0) ATP synthase produces ATP from ADP in the presence of a proton or sodium gradient. F-type ATPases consist of two structural domains, F(1) containing the extramembraneous catalytic core and F(0) containing the membrane proton channel, linked together by a central stalk and a peripheral stalk. During catalysis, ATP synthesis in the catalytic domain of F(1) is coupled via a rotary mechanism of the central stalk subunits to proton translocation. Its function is as follows. Component of the F(0) channel, it forms part of the peripheral stalk, linking F(1) to F(0). The sequence is that of ATP synthase subunit b from Chlorobium chlorochromatii (strain CaD3).